The primary structure comprises 287 residues: rRNA adenine N-6-methyltransferase (287 aa).

Basic residues predominate over residues 1–13; the sequence is MKKKNHKYRGKKL. The segment at 1-21 is disordered; the sequence is MKKKNHKYRGKKLNRGESPNF. 6 residues coordinate S-adenosyl-L-methionine: His25, Met27, Gly52, Glu73, Asp98, and Asn114.

The protein belongs to the class I-like SAM-binding methyltransferase superfamily. rRNA adenine N(6)-methyltransferase family. In terms of assembly, homodimer.

Its function is as follows. Involved in erythromycin resistance. The polypeptide is rRNA adenine N-6-methyltransferase (ermJ) (Bacillus anthracis).